Here is a 151-residue protein sequence, read N- to C-terminus: MKDCKMQGIGSGVSLLILRFFLAWEFFESGLEKWNGQNWFAEIQDRFPFPFNLIPADINWHVAMGSELIFPFLLIFGVLTRFSALSLTILISVAWYSIHADSGYNVCDNGYKLPLIYVVTLLILITQGAGKLSLDTLIKKVYPTKSWLKFL.

The next 4 helical transmembrane spans lie at 8–28, 60–80, 82–102, and 113–133; these read GIGS…EFFE, WHVA…GVLT, FSAL…HADS, and LPLI…GKLS.

Belongs to the DoxX family.

It localises to the cell membrane. This is an uncharacterized protein from Haemophilus influenzae (strain ATCC 51907 / DSM 11121 / KW20 / Rd).